A 129-amino-acid polypeptide reads, in one-letter code: MARRTNTRKRRVRKNIDTGIAHIRSTFNNTIVTITDVHGNALAWASAGSLGFKGSRKSTPFAAQMAAEAAAKASMEHGMKTVEVNVKGPGAGREAAIRALQAAGLEITAIKDVTPIPHDGCRPPKRRRV.

The protein belongs to the universal ribosomal protein uS11 family. As to quaternary structure, part of the 30S ribosomal subunit. Interacts with proteins S7 and S18. Binds to IF-3.

Its function is as follows. Located on the platform of the 30S subunit, it bridges several disparate RNA helices of the 16S rRNA. Forms part of the Shine-Dalgarno cleft in the 70S ribosome. In Geobacillus stearothermophilus (Bacillus stearothermophilus), this protein is Small ribosomal subunit protein uS11.